The following is a 131-amino-acid chain: Small ribosomal subunit protein uS11 (131 aa).

Belongs to the universal ribosomal protein uS11 family. Part of the 30S ribosomal subunit. Interacts with proteins S7 and S18. Binds to IF-3.

Its function is as follows. Located on the platform of the 30S subunit, it bridges several disparate RNA helices of the 16S rRNA. Forms part of the Shine-Dalgarno cleft in the 70S ribosome. This chain is Small ribosomal subunit protein uS11, found in Paramagnetospirillum magneticum (strain ATCC 700264 / AMB-1) (Magnetospirillum magneticum).